The chain runs to 887 residues: Multiple RNA-binding domain-containing protein 1 (887 aa).

The 93-residue stretch at 2-94 folds into the RRM 1 domain; that stretch reads SRIIVKGLPV…SKIEVSMAKS (93 aa). 3 disordered regions span residues 121-143, 203-276, and 297-336; these read KLLQ…NIDD, KEEN…RNLA, and SEAE…DEEL. Residues S220 and S264 each carry the phosphoserine modification. Residues 264 to 276 are compositionally biased toward basic and acidic residues; the sequence is SDEKENEKRRNLA. Polar residues predominate over residues 306–315; that stretch reads SSYATEQNES. A compositionally biased stretch (basic and acidic residues) spans 316–325; sequence LDTKKEEQPE. 4 consecutive RRM domains span residues 345-423, 532-604, 663-746, and 763-840; these read GRLF…PGEE, KVIL…RGPK, VSIF…LSHR, and GKII…YAEE. Positions 864–887 are disordered; it reads EMAALRNGGGRKKLDVDDEENEGF.

It belongs to the RRM MRD1 family. As to quaternary structure, interacts with NOP1. Binds to the 35S pre-rRNA and the U3 snoRNA.

The protein resides in the nucleus. Involved in pre-rRNA processing. Required for maintaining steady-state levels of 40S ribosomal subunit. Required for the initial processing of pre-rRNA at the A0 to A2 sites, leading to the processing of the 23S pre-rRNA intermediate to the 18S rRNA. The polypeptide is Multiple RNA-binding domain-containing protein 1 (MRD1) (Saccharomyces cerevisiae (strain ATCC 204508 / S288c) (Baker's yeast)).